Reading from the N-terminus, the 161-residue chain is Probable chemoreceptor glutamine deamidase CheD (161 aa).

This sequence belongs to the CheD family.

The catalysed reaction is L-glutaminyl-[protein] + H2O = L-glutamyl-[protein] + NH4(+). Probably deamidates glutamine residues to glutamate on methyl-accepting chemotaxis receptors (MCPs), playing an important role in chemotaxis. The sequence is that of Probable chemoreceptor glutamine deamidase CheD from Syntrophomonas wolfei subsp. wolfei (strain DSM 2245B / Goettingen).